Consider the following 420-residue polypeptide: Serine hydroxymethyltransferase (420 aa).

(6S)-5,6,7,8-tetrahydrofolate is bound by residues Leu-121 and 125–127; that span reads GHL. Lys-230 is modified (N6-(pyridoxal phosphate)lysine). Position 355 to 357 (355 to 357) interacts with (6S)-5,6,7,8-tetrahydrofolate; sequence SPF.

It belongs to the SHMT family. In terms of assembly, homodimer. Requires pyridoxal 5'-phosphate as cofactor.

Its subcellular location is the cytoplasm. The enzyme catalyses (6R)-5,10-methylene-5,6,7,8-tetrahydrofolate + glycine + H2O = (6S)-5,6,7,8-tetrahydrofolate + L-serine. It functions in the pathway one-carbon metabolism; tetrahydrofolate interconversion. Its pathway is amino-acid biosynthesis; glycine biosynthesis; glycine from L-serine: step 1/1. Functionally, catalyzes the reversible interconversion of serine and glycine with tetrahydrofolate (THF) serving as the one-carbon carrier. This reaction serves as the major source of one-carbon groups required for the biosynthesis of purines, thymidylate, methionine, and other important biomolecules. Also exhibits THF-independent aldolase activity toward beta-hydroxyamino acids, producing glycine and aldehydes, via a retro-aldol mechanism. The sequence is that of Serine hydroxymethyltransferase from Streptococcus gordonii (strain Challis / ATCC 35105 / BCRC 15272 / CH1 / DL1 / V288).